Here is a 243-residue protein sequence, read N- to C-terminus: MLAEMLWPAVNMLLPRKALLVDIFFILAATNLMIAAFALGCLAFYKQLVYITIGNLTFPHQSGDEVIRAMYIPPVNDSVDFNPGFRLSWLNTLSPLSDGPYDSWSQCEICPGRFVGQKACYYVPPKTYSFQNCFFACKNISKCFYLYTPQNITDPFFDHTLRDQDIWIGTFFKKLNAALSTIDNNFDYTAWDELSVYCAYLTRRSRSTVYFTDCTTSKLCLCGQEDFTPAPFYEALTPAPVHG.

Residues 23–43 (IFFILAATNLMIAAFALGCLA) form a helical membrane-spanning segment. The region spanning 116-223 (GQKACYYVPP…CTTSKLCLCG (108 aa)) is the C-type lectin domain. 2 cysteine pairs are disulfide-bonded: C137-C222 and C198-C214.

It localises to the host membrane. The polypeptide is Putative C-type lectin protein A7 (A7) (Alcelaphine herpesvirus 1 (strain C500) (AlHV-1)).